A 210-amino-acid polypeptide reads, in one-letter code: RNA chaperone ProQ (210 aa).

The segment covering 98 to 127 has biased composition (basic and acidic residues); sequence HAKASLEESKAKVAARRKEQAKKAREEAKA. Residues 98-155 form a disordered region; sequence HAKASLEESKAKVAARRKEQAKKAREEAKAKKPARATTPPKRRPQPAAVAKKQEKPVE.

The protein belongs to the ProQ family.

It is found in the cytoplasm. RNA chaperone with significant RNA binding, RNA strand exchange and RNA duplexing activities. In Aliivibrio salmonicida (strain LFI1238) (Vibrio salmonicida (strain LFI1238)), this protein is RNA chaperone ProQ.